A 382-amino-acid chain; its full sequence is Lipoyl synthase, mitochondrial (382 aa).

The transit peptide at 1 to 30 (MHGRRHLAASLARALTYAPSRSISSTPSLL) directs the protein to the mitochondrion. Over residues 25-34 (STPSLLQTLD) the composition is skewed to polar residues. Residues 25 to 47 (STPSLLQTLDPSTPSPAAAPPTA) are disordered. [4Fe-4S] cluster contacts are provided by cysteine 112, cysteine 117, cysteine 123, cysteine 143, cysteine 147, cysteine 150, and serine 359. The region spanning 128-348 (ETGTATATIM…RSLGVDMGFR (221 aa)) is the Radical SAM core domain.

Belongs to the radical SAM superfamily. Lipoyl synthase family. The cofactor is [4Fe-4S] cluster.

The protein resides in the mitochondrion. The enzyme catalyses [[Fe-S] cluster scaffold protein carrying a second [4Fe-4S](2+) cluster] + N(6)-octanoyl-L-lysyl-[protein] + 2 oxidized [2Fe-2S]-[ferredoxin] + 2 S-adenosyl-L-methionine + 4 H(+) = [[Fe-S] cluster scaffold protein] + N(6)-[(R)-dihydrolipoyl]-L-lysyl-[protein] + 4 Fe(3+) + 2 hydrogen sulfide + 2 5'-deoxyadenosine + 2 L-methionine + 2 reduced [2Fe-2S]-[ferredoxin]. It functions in the pathway protein modification; protein lipoylation via endogenous pathway; protein N(6)-(lipoyl)lysine from octanoyl-[acyl-carrier-protein]: step 2/2. Its function is as follows. Catalyzes the radical-mediated insertion of two sulfur atoms into the C-6 and C-8 positions of the octanoyl moiety bound to the lipoyl domains of lipoate-dependent enzymes, thereby converting the octanoylated domains into lipoylated derivatives. The protein is Lipoyl synthase, mitochondrial of Oryza sativa subsp. indica (Rice).